The sequence spans 145 residues: D-aminoacyl-tRNA deacylase (145 aa).

The Gly-cisPro motif, important for rejection of L-amino acids motif lies at 137–138; that stretch reads GP.

This sequence belongs to the DTD family. As to quaternary structure, homodimer.

It is found in the cytoplasm. It carries out the reaction glycyl-tRNA(Ala) + H2O = tRNA(Ala) + glycine + H(+). The catalysed reaction is a D-aminoacyl-tRNA + H2O = a tRNA + a D-alpha-amino acid + H(+). Functionally, an aminoacyl-tRNA editing enzyme that deacylates mischarged D-aminoacyl-tRNAs. Also deacylates mischarged glycyl-tRNA(Ala), protecting cells against glycine mischarging by AlaRS. Acts via tRNA-based rather than protein-based catalysis; rejects L-amino acids rather than detecting D-amino acids in the active site. By recycling D-aminoacyl-tRNA to D-amino acids and free tRNA molecules, this enzyme counteracts the toxicity associated with the formation of D-aminoacyl-tRNA entities in vivo and helps enforce protein L-homochirality. This chain is D-aminoacyl-tRNA deacylase, found in Carboxydothermus hydrogenoformans (strain ATCC BAA-161 / DSM 6008 / Z-2901).